The chain runs to 468 residues: Beta-monoglucosyldiacylglycerol synthase (468 aa).

4 helical membrane-spanning segments follow: residues 51–71, 72–92, 358–378, and 387–407; these read AALV…VSWG, SIFI…VVFA, MLMF…DLLM, and MLGP…FAGL.

The protein belongs to the glycosyltransferase 2 family. Requires Mg(2+) as cofactor.

It is found in the membrane. The enzyme catalyses a 1,2-diacyl-sn-glycerol + UDP-alpha-D-glucose = a 1,2-diacyl-3-O-(beta-D-glucopyranosyl)-sn-glycerol + UDP + H(+). Its function is as follows. Glucosyltransferase involved in the biosynthesis of the non-bilayer-forming membrane lipid beta-monoglucosyldiacylglycerol which contributes to regulate the properties and stability of the membrane. Catalyzes the transfer of a glucosyl residue from UDP-Glc to diacylglycerol (DAG) acceptor to form the corresponding beta-glucosyl-DAG (1,2-diacyl-3-O-(beta-D-glucopyranosyl)-sn-glycerol). It can only use UDP-Glc as sugar donor. Two types of DAG (dipalmitoyl-DAG (DPDAG) and 1-oleoyl-2-palmitoyl-DAG (OPDAG)) can be used as sugar acceptors, but OPDAG is preferred. The sequence is that of Beta-monoglucosyldiacylglycerol synthase from Nostoc sp. (strain PCC 7120 / SAG 25.82 / UTEX 2576).